We begin with the raw amino-acid sequence, 164 residues long: Cyanate hydratase (164 aa).

Active-site residues include arginine 90, glutamate 93, and serine 116.

The protein belongs to the cyanase family.

It carries out the reaction cyanate + hydrogencarbonate + 3 H(+) = NH4(+) + 2 CO2. In terms of biological role, catalyzes the reaction of cyanate with bicarbonate to produce ammonia and carbon dioxide. The polypeptide is Cyanate hydratase (Vitis vinifera (Grape)).